A 315-amino-acid polypeptide reads, in one-letter code: Adenine deaminase (315 aa).

H14, H16, and H194 together coordinate Zn(2+). Catalysis depends on E197, which acts as the Proton donor. D275 contacts Zn(2+). Substrate is bound at residue D276.

This sequence belongs to the metallo-dependent hydrolases superfamily. Adenosine and AMP deaminases family. Adenine deaminase type 2 subfamily. Zn(2+) serves as cofactor.

The enzyme catalyses adenine + H2O + H(+) = hypoxanthine + NH4(+). Its function is as follows. Catalyzes the hydrolytic deamination of adenine to hypoxanthine. Plays an important role in the purine salvage pathway and in nitrogen catabolism. The sequence is that of Adenine deaminase from Pseudomonas putida (strain ATCC 47054 / DSM 6125 / CFBP 8728 / NCIMB 11950 / KT2440).